The following is an 82-amino-acid chain: Escargot/snail protein homolog (82 aa).

C2H2-type zinc fingers lie at residues 1-5 (HLQFH), 18-40 (FSCKLCDKVYTSLGALKMHIRTH), 44-66 (CKCDICHKAFSRPWLLQGHIRTH), and 72-82 (FSCQHCHRAFA).

The protein belongs to the snail C2H2-type zinc-finger protein family.

It is found in the nucleus. In Bradysia coprophila (Dark-winged fungus gnat), this protein is Escargot/snail protein homolog.